Consider the following 102-residue polypeptide: Flagellar hook-basal body complex protein FliE (102 aa).

Belongs to the FliE family.

The protein localises to the bacterial flagellum basal body. This Halalkalibacterium halodurans (strain ATCC BAA-125 / DSM 18197 / FERM 7344 / JCM 9153 / C-125) (Bacillus halodurans) protein is Flagellar hook-basal body complex protein FliE.